The primary structure comprises 200 residues: Dephospho-CoA kinase (200 aa).

Residues 4-200 (VIGLTGGIAS…VILKKWNIID (197 aa)) enclose the DPCK domain. 12–17 (ASGKST) contributes to the ATP binding site.

This sequence belongs to the CoaE family.

Its subcellular location is the cytoplasm. The enzyme catalyses 3'-dephospho-CoA + ATP = ADP + CoA + H(+). It participates in cofactor biosynthesis; coenzyme A biosynthesis; CoA from (R)-pantothenate: step 5/5. In terms of biological role, catalyzes the phosphorylation of the 3'-hydroxyl group of dephosphocoenzyme A to form coenzyme A. The protein is Dephospho-CoA kinase of Bacillus cereus (strain ATCC 14579 / DSM 31 / CCUG 7414 / JCM 2152 / NBRC 15305 / NCIMB 9373 / NCTC 2599 / NRRL B-3711).